The primary structure comprises 379 residues: Chaperone protein DnaJ (379 aa).

The 66-residue stretch at 7–72 folds into the J domain; the sequence is DYYEVLGVDK…KKRSMYDQFG (66 aa). Residues 147 to 225 form a CR-type zinc finger; it reads GKKAELSYTR…CGGNGLERKK (79 aa). Zn(2+)-binding residues include cysteine 160, cysteine 163, cysteine 177, cysteine 180, cysteine 199, cysteine 202, cysteine 213, and cysteine 216. CXXCXGXG motif repeat units lie at residues 160–167, 177–184, 199–206, and 213–220; these read CSECHGTG, CPDCKGTG, CPTCGGEG, and CKKCGGNG.

It belongs to the DnaJ family. Homodimer. The cofactor is Zn(2+).

The protein localises to the cytoplasm. Functionally, participates actively in the response to hyperosmotic and heat shock by preventing the aggregation of stress-denatured proteins and by disaggregating proteins, also in an autonomous, DnaK-independent fashion. Unfolded proteins bind initially to DnaJ; upon interaction with the DnaJ-bound protein, DnaK hydrolyzes its bound ATP, resulting in the formation of a stable complex. GrpE releases ADP from DnaK; ATP binding to DnaK triggers the release of the substrate protein, thus completing the reaction cycle. Several rounds of ATP-dependent interactions between DnaJ, DnaK and GrpE are required for fully efficient folding. Also involved, together with DnaK and GrpE, in the DNA replication of plasmids through activation of initiation proteins. The protein is Chaperone protein DnaJ of Treponema denticola (strain ATCC 35405 / DSM 14222 / CIP 103919 / JCM 8153 / KCTC 15104).